We begin with the raw amino-acid sequence, 228 residues long: Cytochrome c oxidase subunit 2 (228 aa).

At 1 to 26 (MATWNNLNLQNGASPLMEQIIFFHDH) the chain is on the mitochondrial intermembrane side. The helical transmembrane segment at 27–48 (TLIILIMITILVGYLMINLFFN) threads the bilayer. Over 49–62 (KYINRFLLEGQMIE) the chain is Mitochondrial matrix. Residues 63-82 (LIWTILPAITLIFIALPSLR) traverse the membrane as a helical segment. At 83-228 (LLYLLDELNN…FIKWINNYSS (146 aa)) the chain is on the mitochondrial intermembrane side. Positions 161, 196, 198, 200, 204, and 207 each coordinate Cu cation. Residue Glu198 coordinates Mg(2+).

Belongs to the cytochrome c oxidase subunit 2 family. As to quaternary structure, component of the cytochrome c oxidase (complex IV, CIV), a multisubunit enzyme composed of a catalytic core of 3 subunits and several supernumerary subunits. The complex exists as a monomer or a dimer and forms supercomplexes (SCs) in the inner mitochondrial membrane with ubiquinol-cytochrome c oxidoreductase (cytochrome b-c1 complex, complex III, CIII). The cofactor is Cu cation.

The protein resides in the mitochondrion inner membrane. It carries out the reaction 4 Fe(II)-[cytochrome c] + O2 + 8 H(+)(in) = 4 Fe(III)-[cytochrome c] + 2 H2O + 4 H(+)(out). Functionally, component of the cytochrome c oxidase, the last enzyme in the mitochondrial electron transport chain which drives oxidative phosphorylation. The respiratory chain contains 3 multisubunit complexes succinate dehydrogenase (complex II, CII), ubiquinol-cytochrome c oxidoreductase (cytochrome b-c1 complex, complex III, CIII) and cytochrome c oxidase (complex IV, CIV), that cooperate to transfer electrons derived from NADH and succinate to molecular oxygen, creating an electrochemical gradient over the inner membrane that drives transmembrane transport and the ATP synthase. Cytochrome c oxidase is the component of the respiratory chain that catalyzes the reduction of oxygen to water. Electrons originating from reduced cytochrome c in the intermembrane space (IMS) are transferred via the dinuclear copper A center (CU(A)) of subunit 2 and heme A of subunit 1 to the active site in subunit 1, a binuclear center (BNC) formed by heme A3 and copper B (CU(B)). The BNC reduces molecular oxygen to 2 water molecules using 4 electrons from cytochrome c in the IMS and 4 protons from the mitochondrial matrix. The sequence is that of Cytochrome c oxidase subunit 2 (COII) from Yponomeuta malinellus (European small ermine moth).